Reading from the N-terminus, the 234-residue chain is Thymidine kinase, cytosolic (234 aa).

The residue at position 13 (Ser13) is a Phosphoserine. ATP-binding positions include 26 to 33 (GPMFSGKS), 58 to 60 (DTR), and 97 to 100 (DEGQ). Catalysis depends on Glu98, which acts as the Proton acceptor. Phe128 lines the substrate pocket. The Zn(2+) site is built by Cys153 and Cys156. Substrate-binding positions include 172–176 (VEVIG) and Tyr181. Positions 185 and 188 each coordinate Zn(2+). Residues 203 to 205 (KEN) carry the KEN box motif.

This sequence belongs to the thymidine kinase family. As to quaternary structure, homotetramer. Tetramerization from dimerization is induced by ATP and increases catalytic efficiency due to a high affinity for thymidine. Tetramerization is inhibited by phosphorylation at Ser-13. Interacts (via the KEN box) with FZR1. In terms of processing, phosphorylated on Ser-13 in mitosis. Phosphorylation of Ser-13 by CDK1 during mitosis reduces homotetramerization and catalytic efficiency when DNA replication is complete and intracellular TK1 is still present at a high level. Polyubiquitinated. Postmitosis, ubiquitination leads to proteasomal degradation. The KEN box sequence located at the C-terminal region targets for degradation by the anaphase promoting complex (APC/C) activated and rate-limited by FZR1.

The protein localises to the cytoplasm. The catalysed reaction is thymidine + ATP = dTMP + ADP + H(+). Cell-cycle-regulated enzyme of importance in nucleotide metabolism. Catalyzes the first enzymatic step in the salvage pathway converting thymidine into thymidine monophosphate. Transcriptional regulation limits expression to the S phase of the cell cycle and transient expression coincides with the oscillation in the intracellular dTTP concentration. The chain is Thymidine kinase, cytosolic (TK1) from Cricetulus griseus (Chinese hamster).